The following is a 1333-amino-acid chain: Xanthine dehydrogenase/oxidase (1333 aa).

The 2Fe-2S ferredoxin-type domain occupies 4–91 (DKLVFFVNGR…HVAVTTVEGI (88 aa)). [2Fe-2S] cluster is bound by residues Cys43, Cys48, Cys51, Cys73, Cys113, Cys116, Cys148, and Cys150. The 186-residue stretch at 229–414 (FEGERVTWIQ…LSIEIPYSRE (186 aa)) folds into the FAD-binding PCMH-type domain. FAD-binding positions include 257–264 (LVVGNTEI), Phe337, 347–351 (SVGGN), Asp360, Leu404, and Lys422. Cystine bridges form between Cys509–Cys1318 and Cys536–Cys993. 2 residues coordinate Mo-molybdopterin: Gln768 and Phe799. The substrate site is built by Glu803 and Arg881. A Mo-molybdopterin-binding site is contributed by Arg913. Phe915 and Thr1011 together coordinate substrate. Ala1080 is a binding site for Mo-molybdopterin. The active-site Proton acceptor is the Glu1262.

The protein belongs to the xanthine dehydrogenase family. As to quaternary structure, homodimer. Interacts with BTN1A1. Requires [2Fe-2S] cluster as cofactor. It depends on FAD as a cofactor. Mo-molybdopterin is required as a cofactor. Post-translationally, subject to partial proteolysis; this alters the enzyme from the dehydrogenase form (D) to the oxidase form (O). Contains sulfhydryl groups that are easily oxidized (in vitro); this alters the enzyme from the dehydrogenase form (D) to the oxidase form (O). As to expression, detected in milk (at protein level).

It localises to the cytoplasm. It is found in the peroxisome. Its subcellular location is the secreted. It carries out the reaction xanthine + NAD(+) + H2O = urate + NADH + H(+). The catalysed reaction is hypoxanthine + NAD(+) + H2O = xanthine + NADH + H(+). The enzyme catalyses xanthine + O2 + H2O = urate + H2O2. Its activity is regulated as follows. Can be converted from the dehydrogenase form (D) to the oxidase form (O) irreversibly by proteolysis or reversibly through the oxidation of sulfhydryl groups. Its function is as follows. Key enzyme in purine degradation. Catalyzes the oxidation of hypoxanthine to xanthine. Catalyzes the oxidation of xanthine to uric acid. Contributes to the generation of reactive oxygen species. Has also low oxidase activity towards aldehydes (in vitro). This is Xanthine dehydrogenase/oxidase (XDH) from Homo sapiens (Human).